We begin with the raw amino-acid sequence, 458 residues long: Bifunctional thioredoxin reductase/thioredoxin (458 aa).

The interval 1-321 (MNTTPSAHET…LAEHAGSKAN (321 aa)) is thioredoxin reductase. FAD contacts are provided by residues 19–22 (SGPA), 41–48 (EGTSFGGA), Asn-57, and Val-90. Residues Cys-142 and Cys-145 are joined by a disulfide bond. Positions 163, 182, 188, 245, and 265 each coordinate NADP(+). FAD is bound by residues Asp-285 and 292-295 (RQAI). NADP(+) is bound at residue Arg-292. Residues 322-347 (ETTEETGDVDSTDTTDWSTAMTDAKN) are linker. The Thioredoxin domain occupies 341–455 (AMTDAKNAGV…LLRDLSDVVP (115 aa)). Residues Cys-379 and Cys-382 are joined by a disulfide bond.

The protein in the N-terminal section; belongs to the class-II pyridine nucleotide-disulfide oxidoreductase family. Homodimer. FAD serves as cofactor.

It localises to the cytoplasm. It catalyses the reaction [thioredoxin]-dithiol + NADP(+) = [thioredoxin]-disulfide + NADPH + H(+). The chain is Bifunctional thioredoxin reductase/thioredoxin (trxB/A) from Mycobacterium leprae (strain TN).